The sequence spans 349 residues: Protein-glutamate methylesterase/protein-glutamine glutaminase (349 aa).

Positions 2 to 118 constitute a Response regulatory domain; sequence RVLVVDDSAL…VDLSSVAQEL (117 aa). Position 52 is a 4-aspartylphosphate (Asp52). Positions 159–345 constitute a CheB-type methylesterase domain; sequence VLIGSSTGGP…EEIVRFLEVK (187 aa). Active-site residues include Ser164, His191, and Asp287.

The protein belongs to the CheB family. Post-translationally, phosphorylated by CheA. Phosphorylation of the N-terminal regulatory domain activates the methylesterase activity.

Its subcellular location is the cytoplasm. The enzyme catalyses [protein]-L-glutamate 5-O-methyl ester + H2O = L-glutamyl-[protein] + methanol + H(+). The catalysed reaction is L-glutaminyl-[protein] + H2O = L-glutamyl-[protein] + NH4(+). Functionally, involved in chemotaxis. Part of a chemotaxis signal transduction system that modulates chemotaxis in response to various stimuli. Catalyzes the demethylation of specific methylglutamate residues introduced into the chemoreceptors (methyl-accepting chemotaxis proteins or MCP) by CheR. Also mediates the irreversible deamidation of specific glutamine residues to glutamic acid. The polypeptide is Protein-glutamate methylesterase/protein-glutamine glutaminase (Archaeoglobus fulgidus (strain ATCC 49558 / DSM 4304 / JCM 9628 / NBRC 100126 / VC-16)).